The following is an 877-amino-acid chain: Neurotrypsin (877 aa).

An N-terminal signal peptide occupies residues 1–20; the sequence is MTLARFVLALVLGALPEVVS. An N-linked (GlcNAc...) asparagine glycan is attached at Asn26. The tract at residues 31 to 90 is disordered; sequence HRHRHRHSPPPGLQYPYYLPTQQRPPRTRPPPPLPRFPRPPRALPAQRPHALQAGHTPRP. Residues 44–55 are compositionally biased toward low complexity; it reads QYPYYLPTQQRP. Residues 58-73 are compositionally biased toward pro residues; the sequence is TRPPPPLPRFPRPPRA. The region spanning 95-167 is the Kringle domain; that stretch reads CPAGEPWVSV…GKVDWGYCDC (73 aa). 20 disulfide bridges follow: Cys95–Cys167, Cys111–Cys151, Cys140–Cys165, Cys197–Cys261, Cys210–Cys271, Cys241–Cys251, Cys307–Cys371, Cys320–Cys381, Cys351–Cys361, Cys414–Cys477, Cys427–Cys487, Cys457–Cys467, Cys527–Cys591, Cys540–Cys601, Cys571–Cys581, Cys621–Cys752, Cys663–Cys679, Cys767–Cys833, Cys796–Cys810, and Cys823–Cys852. SRCR domains are found at residues 172-273, 282-383, 389-489, and 502-603; these read VRLR…TCSF, IRLV…SCTP, IRLA…ACYP, and VRLM…ICDY. The segment at 621–632 is zymogen activation region; it reads CGLRLLHRRQKR. One can recognise a Peptidase S1 domain in the interval 633 to 876; it reads IIGGKNSLRG…FVPWIKSVTK (244 aa). His678 serves as the catalytic Charge relay system. Asn685 is a glycosylation site (N-linked (GlcNAc...) asparagine). The active-site Charge relay system is Asp728. Ser827 acts as the Charge relay system in catalysis.

Belongs to the peptidase S1 family.

The protein resides in the secreted. Plays a role in neuronal plasticity and the proteolytic action may subserve structural reorganizations associated with learning and memory operations. This is Neurotrypsin (PRSS12) from Pongo pygmaeus (Bornean orangutan).